A 316-amino-acid chain; its full sequence is Acetaldehyde dehydrogenase 1 (316 aa).

12–15 (SGNI) provides a ligand contact to NAD(+). Cys132 functions as the Acyl-thioester intermediate in the catalytic mechanism. NAD(+) is bound by residues 163-171 (SAGPGTRAN) and Asn291.

Belongs to the acetaldehyde dehydrogenase family.

The enzyme catalyses acetaldehyde + NAD(+) + CoA = acetyl-CoA + NADH + H(+). The polypeptide is Acetaldehyde dehydrogenase 1 (Pseudomonas putida (strain ATCC 700007 / DSM 6899 / JCM 31910 / BCRC 17059 / LMG 24140 / F1)).